We begin with the raw amino-acid sequence, 647 residues long: MAKIIGIDLGTTNSCVAVLEGDKVKVIENAEGTRTTPSIVAYKDSEILVGQSAKRQAVTNPKNTLFAIKRLIGRRYEDQAVQKDIGLVPYKIIKADNGDAWVEVNDKKLAPQQVSAEILKKMKKTAEDYLGETVTEAVITVPAYFNDAQRQATKDAGRIAGLDVKRIINEPTAAALAFGMDKKEGDRKVAVYDLGGGTFDVSIIEIADLDGDQQIEVLSTNGDTFLGGEDFDTALIDYLVEEFKKEQSVNLKNDPLALQRLKEAAEKAKIELSSSSSTEINLPYITADATGPKHLVINVTRAKLEGLVADLVARTIEPCRIALKDAGLSTSDISDVILVGGQSRMPMVQQKVQEFFGKEPRKDVNPDEAVAIGAAIQGAVLSGDKTDVLLLDVTPLTLGIETMGGVLTPIIEKNTTIPAKKSQVFSTAADNQPAVDISVYQGERKMAQQNKLLGNFQLGDIPPAPRGVPQIEVSFDINADGILKVSAKDKSTGKEQSIQIKANSGLSDAEIEAMIKDAEANAEEDRKFEELAKARNEADALVSSSNKAVKDLGDKVTEDEKTAITTAVSELEAATKENDVEDIKAKTEALQNILMPITQRAYEQAQGAGGAQGFDPNAFQGGDAGQQQKADDGVVDAEFTEVKDDKK.

Thr198 is modified (phosphothreonine; by autocatalysis). A disordered region spans residues 603 to 647 (EQAQGAGGAQGFDPNAFQGGDAGQQQKADDGVVDAEFTEVKDDKK). Residues 618 to 628 (AFQGGDAGQQQ) are compositionally biased toward low complexity.

The protein belongs to the heat shock protein 70 family.

Acts as a chaperone. The chain is Chaperone protein DnaK from Acinetobacter baylyi (strain ATCC 33305 / BD413 / ADP1).